Here is a 94-residue protein sequence, read N- to C-terminus: Large ribosomal subunit protein bL25 (94 aa).

Belongs to the bacterial ribosomal protein bL25 family. As to quaternary structure, part of the 50S ribosomal subunit; part of the 5S rRNA/L5/L18/L25 subcomplex. Contacts the 5S rRNA. Binds to the 5S rRNA independently of L5 and L18.

In terms of biological role, this is one of the proteins that binds to the 5S RNA in the ribosome where it forms part of the central protuberance. The polypeptide is Large ribosomal subunit protein bL25 (Pectobacterium atrosepticum (strain SCRI 1043 / ATCC BAA-672) (Erwinia carotovora subsp. atroseptica)).